Consider the following 188-residue polypeptide: Large ribosomal subunit protein eL18 (188 aa).

A Glycyl lysine isopeptide (Lys-Gly) (interchain with G-Cter in SUMO2) cross-link involves residue Lys119. Ser130 is modified (phosphoserine). Positions 150 to 188 are disordered; it reads RHFGKAPRTPHSHTKPYVRSKGRKFERARGRWASRGYKN. Composition is skewed to basic residues over residues 151–171 and 179–188; these read HFGK…RSKG and GRWASRGYKN. Position 158 is a phosphothreonine (Thr158). Residue Lys164 forms a Glycyl lysine isopeptide (Lys-Gly) (interchain with G-Cter in SUMO2) linkage.

The protein belongs to the eukaryotic ribosomal protein eL18 family. In terms of assembly, component of the large ribosomal subunit.

It localises to the cytoplasm. The protein localises to the cytosol. It is found in the rough endoplasmic reticulum. Component of the large ribosomal subunit. The ribosome is a large ribonucleoprotein complex responsible for the synthesis of proteins in the cell. The protein is Large ribosomal subunit protein eL18 (RPL18) of Oryctolagus cuniculus (Rabbit).